The primary structure comprises 281 residues: N-acetylmuramic acid 6-phosphate etherase (281 aa).

The 164-residue stretch at 63–226 (IVPRMKQGGR…TTSVMIQLGR (164 aa)) folds into the SIS domain. Glutamate 91 serves as the catalytic Proton donor. Glutamate 122 is a catalytic residue.

The protein belongs to the GCKR-like family. MurNAc-6-P etherase subfamily. Homodimer.

The catalysed reaction is N-acetyl-D-muramate 6-phosphate + H2O = N-acetyl-D-glucosamine 6-phosphate + (R)-lactate. It participates in amino-sugar metabolism; N-acetylmuramate degradation. Specifically catalyzes the cleavage of the D-lactyl ether substituent of MurNAc 6-phosphate, producing GlcNAc 6-phosphate and D-lactate. The sequence is that of N-acetylmuramic acid 6-phosphate etherase from Bacteroides fragilis (strain ATCC 25285 / DSM 2151 / CCUG 4856 / JCM 11019 / LMG 10263 / NCTC 9343 / Onslow / VPI 2553 / EN-2).